The primary structure comprises 139 residues: D-ribose pyranase (139 aa).

His-20 functions as the Proton donor in the catalytic mechanism. Substrate contacts are provided by residues Asp-28, His-106, and 128–130 (YAN).

It belongs to the RbsD / FucU family. RbsD subfamily. Homodecamer.

The protein localises to the cytoplasm. It catalyses the reaction beta-D-ribopyranose = beta-D-ribofuranose. Its pathway is carbohydrate metabolism; D-ribose degradation; D-ribose 5-phosphate from beta-D-ribopyranose: step 1/2. Functionally, catalyzes the interconversion of beta-pyran and beta-furan forms of D-ribose. The chain is D-ribose pyranase from Photobacterium profundum (strain SS9).